The sequence spans 614 residues: Putative N(6)-adenosine-methyltransferase MT-A70-like (614 aa).

Residues 59–78 form a disordered region; the sequence is TPPLTNFNPPKSSSLQQLPQ. The span at 67–78 shows a compositional bias: low complexity; that stretch reads PPKSSSLQQLPQ. S-adenosyl-L-methionine contacts are provided by residues 391–392 and Asp409; that span reads DI. Residues 479 to 492 are positively charged region required for RNA-binding; it reads RIIRTGRTGHWLNH. Residues Lys526, 549-552, and 562-563 contribute to the S-adenosyl-L-methionine site; these read RMHN and NQ. The interval 589-614 is disordered; sequence PASPSRASAMELDSSVAAQTTTSAMM. Polar residues predominate over residues 604-614; the sequence is VAAQTTTSAMM.

It belongs to the MT-A70-like family.

It is found in the nucleus. It carries out the reaction an adenosine in mRNA + S-adenosyl-L-methionine = an N(6)-methyladenosine in mRNA + S-adenosyl-L-homocysteine + H(+). Putative N6-methyltransferase that methylates adenosine residues of some mRNAs. N6-methyladenosine (m6A), which is present at internal sites of some mRNAs, may play a role in the efficiency of mRNA splicing, transport or translation. The polypeptide is Putative N(6)-adenosine-methyltransferase MT-A70-like (Medicago truncatula (Barrel medic)).